Reading from the N-terminus, the 315-residue chain is DNA-directed RNA polymerase subunit alpha (315 aa).

Positions 1-228 (MLEIEKPKIE…EHFKLFMTLT (228 aa)) are alpha N-terminal domain (alpha-NTD). Positions 245 to 315 (KEKVLEMAIE…LGLSLKQNED (71 aa)) are alpha C-terminal domain (alpha-CTD).

The protein belongs to the RNA polymerase alpha chain family. As to quaternary structure, homodimer. The RNAP catalytic core consists of 2 alpha, 1 beta, 1 beta' and 1 omega subunit. When a sigma factor is associated with the core the holoenzyme is formed, which can initiate transcription.

It catalyses the reaction RNA(n) + a ribonucleoside 5'-triphosphate = RNA(n+1) + diphosphate. In terms of biological role, DNA-dependent RNA polymerase catalyzes the transcription of DNA into RNA using the four ribonucleoside triphosphates as substrates. The protein is DNA-directed RNA polymerase subunit alpha of Clostridium kluyveri (strain NBRC 12016).